The sequence spans 254 residues: Large ribosomal subunit protein uL4 (254 aa).

This sequence belongs to the universal ribosomal protein uL4 family. Part of the 50S ribosomal subunit.

In terms of biological role, one of the primary rRNA binding proteins, this protein initially binds near the 5'-end of the 23S rRNA. It is important during the early stages of 50S assembly. It makes multiple contacts with different domains of the 23S rRNA in the assembled 50S subunit and ribosome. Its function is as follows. Forms part of the polypeptide exit tunnel. This Methanothermobacter thermautotrophicus (strain ATCC 29096 / DSM 1053 / JCM 10044 / NBRC 100330 / Delta H) (Methanobacterium thermoautotrophicum) protein is Large ribosomal subunit protein uL4.